Reading from the N-terminus, the 154-residue chain is Ascorbate-specific PTS system EIIA component (154 aa).

In terms of domain architecture, PTS EIIA type-2 spans 6–150; the sequence is SLAENKSIRL…QEVLDLIDRT (145 aa). H68 (tele-phosphohistidine intermediate) is an active-site residue. Phosphohistidine is present on H68.

It localises to the cytoplasm. In terms of biological role, the phosphoenolpyruvate-dependent sugar phosphotransferase system (sugar PTS), a major carbohydrate active transport system, catalyzes the phosphorylation of incoming sugar substrates concomitantly with their translocation across the cell membrane. The enzyme II UlaABC PTS system is involved in ascorbate transport. This is Ascorbate-specific PTS system EIIA component (ulaC) from Escherichia coli O157:H7.